We begin with the raw amino-acid sequence, 391 residues long: Formate-dependent phosphoribosylglycinamide formyltransferase (391 aa).

N(1)-(5-phospho-beta-D-ribosyl)glycinamide-binding positions include 20 to 21 (EL) and Glu80. ATP contacts are provided by residues Arg112, Lys153, 158-163 (SSGKGQ), 193-196 (EGFI), and Glu201. One can recognise an ATP-grasp domain in the interval 117–306 (RLAAEELGLT…EFALHVRAFT (190 aa)). Mg(2+) is bound by residues Glu265 and Glu277. N(1)-(5-phospho-beta-D-ribosyl)glycinamide contacts are provided by residues Asp284, Lys354, and 361–362 (RR).

The protein belongs to the PurK/PurT family. As to quaternary structure, homodimer.

The catalysed reaction is N(1)-(5-phospho-beta-D-ribosyl)glycinamide + formate + ATP = N(2)-formyl-N(1)-(5-phospho-beta-D-ribosyl)glycinamide + ADP + phosphate + H(+). It functions in the pathway purine metabolism; IMP biosynthesis via de novo pathway; N(2)-formyl-N(1)-(5-phospho-D-ribosyl)glycinamide from N(1)-(5-phospho-D-ribosyl)glycinamide (formate route): step 1/1. In terms of biological role, involved in the de novo purine biosynthesis. Catalyzes the transfer of formate to 5-phospho-ribosyl-glycinamide (GAR), producing 5-phospho-ribosyl-N-formylglycinamide (FGAR). Formate is provided by PurU via hydrolysis of 10-formyl-tetrahydrofolate. This Vibrio vulnificus (strain CMCP6) protein is Formate-dependent phosphoribosylglycinamide formyltransferase.